The primary structure comprises 370 residues: uncharacterized protein (370 aa).

It belongs to the metallo-dependent hydrolases superfamily.

This is an uncharacterized protein from Mycobacterium bovis (strain ATCC BAA-935 / AF2122/97).